Here is a 563-residue protein sequence, read N- to C-terminus: Bifunctional dihydrofolate reductase-thymidylate synthase (563 aa).

Residues K3–V195 enclose the DHFR domain. Residue G117–L124 coordinates NADP(+). The interval Y275 to A563 is thymidylate synthase. R292 contributes to the dUMP binding site. Residue C435 is part of the active site. DUMP-binding positions include H436, Q464–D468, N474, and H504–Y506.

This sequence in the N-terminal section; belongs to the dihydrofolate reductase family. The protein in the C-terminal section; belongs to the thymidylate synthase family.

It carries out the reaction (6S)-5,6,7,8-tetrahydrofolate + NADP(+) = 7,8-dihydrofolate + NADPH + H(+). The enzyme catalyses dUMP + (6R)-5,10-methylene-5,6,7,8-tetrahydrofolate = 7,8-dihydrofolate + dTMP. It functions in the pathway cofactor biosynthesis; tetrahydrofolate biosynthesis; 5,6,7,8-tetrahydrofolate from 7,8-dihydrofolate: step 1/1. Its function is as follows. Bifunctional enzyme. Involved in de novo dTMP biosynthesis. Key enzyme in folate metabolism. Catalyzes an essential reaction for de novo glycine and purine synthesis, DNA precursor synthesis, and for the conversion of dUMP to dTMP. In Acanthamoeba polyphaga mimivirus (APMV), this protein is Bifunctional dihydrofolate reductase-thymidylate synthase.